The chain runs to 312 residues: Olfactory receptor 2L2 (312 aa).

Residues 1–24 lie on the Extracellular side of the membrane; it reads MENYNQTSTDFILLGLFPQSRIGL. A glycan (N-linked (GlcNAc...) asparagine) is linked at Asn5. The helical transmembrane segment at 25-48 threads the bilayer; the sequence is FVFTLIFLIFLMALIGNLSMILLI. Over 49–56 the chain is Cytoplasmic; the sequence is FLDIHLHT. Residues 57–78 traverse the membrane as a helical segment; that stretch reads PMYFLLSQLSLIDLNYISTIVP. The Extracellular segment spans residues 79–99; sequence KMVYDFLYGNKSISFTGCGIQ. N-linked (GlcNAc...) asparagine glycosylation is present at Asn88. Cys96 and Cys188 are disulfide-bonded. A helical membrane pass occupies residues 100-119; that stretch reads SFFFLTLAVAEGLLLTSMAY. Topologically, residues 120–138 are cytoplasmic; it reads DRYVAICFPLHYPIRISKR. Residues 139-157 form a helical membrane-spanning segment; it reads VCVMMITGSWMISSINSCA. The Extracellular portion of the chain corresponds to 158-194; the sequence is HTVYALCIPYCKSRAINHFFCDVPAMLTLACTDTWVY. Residues 195–218 traverse the membrane as a helical segment; it reads ESTVFLSSTIFLVLPFTGIACSYG. Over 219–235 the chain is Cytoplasmic; sequence RVLLAVYRMHSAEGRKK. Residues 236–258 traverse the membrane as a helical segment; it reads AYSTCSTHLTVVSFYYAPFAYTY. The Extracellular segment spans residues 259 to 271; that stretch reads VRPRSLRSPTEDK. The helical transmembrane segment at 272–291 threads the bilayer; the sequence is ILAVFYTILTPMLNPIIYSL. The Cytoplasmic portion of the chain corresponds to 292–312; the sequence is RNKEVMGALTQVIQKIFSVKM.

The protein belongs to the G-protein coupled receptor 1 family.

It is found in the cell membrane. Functionally, odorant receptor. This chain is Olfactory receptor 2L2 (OR2L2), found in Homo sapiens (Human).